A 579-amino-acid polypeptide reads, in one-letter code: 6-deoxy-6-sulfo-D-gluconate dehydratase (579 aa).

[4Fe-4S] cluster contacts are provided by cysteine 59, cysteine 127, and cysteine 200.

The protein belongs to the IlvD/Edd family. In terms of assembly, homodimer. The cofactor is [4Fe-4S] cluster.

It catalyses the reaction 6-deoxy-6-sulfo-D-gluconate = 2-dehydro-3,6-dideoxy-6-sulfo-D-gluconate + H2O. Catalyzes the dehydration of 6-deoxy-6-sulfo-D-gluconate to 2-dehydro-3,6-dideoxy-6-sulfo-D-gluconate. Is involved in a degradation pathway of sulfoquinovose (SQ) that allows P.putida SQ1 to use SQ as the sole carbon and energy source for growth. This is 6-deoxy-6-sulfo-D-gluconate dehydratase from Pseudomonas putida (Arthrobacter siderocapsulatus).